Consider the following 54-residue polypeptide: U7-ctenitoxin-Pk1a (54 aa).

5 disulfides stabilise this stretch: C3–C17, C10–C23, C14–C52, C16–C37, and C25–C35.

As to expression, expressed by the venom gland.

Its subcellular location is the secreted. In terms of biological role, blocks voltage-gated sodium channels (Nav). Causes immediate spastic paralysis and death in mice within 1 minute of injection at dose levels of 1.5 ug per mouse. This chain is U7-ctenitoxin-Pk1a, found in Phoneutria keyserlingi (Brazilian wandering spider).